We begin with the raw amino-acid sequence, 183 residues long: Somatotropin (183 aa).

Zn(2+) is bound at residue histidine 19. Positions 38 to 67 (EEQRHSHKSSPSAFCQSETIPAPTGKEDAQ) are disordered. The span at 46–56 (SSPSAFCQSET) shows a compositional bias: polar residues. Cysteine 52 and cysteine 156 are disulfide-bonded. Position 165 (glutamate 165) interacts with Zn(2+). A disulfide bond links cysteine 173 and cysteine 181.

This sequence belongs to the somatotropin/prolactin family.

The protein localises to the secreted. In terms of biological role, growth hormone plays an important role in growth control and is involved in the regulation of several anabolic processes. Implicated as an osmoregulatory substance important for seawater adaptation. The chain is Somatotropin (gh) from Prionace glauca (Blue shark).